Reading from the N-terminus, the 124-residue chain is Acidic phospholipase A2 A (124 aa).

Cystine bridges form between cysteine 26–cysteine 116, cysteine 28–cysteine 44, cysteine 43–cysteine 95, cysteine 49–cysteine 124, cysteine 50–cysteine 88, cysteine 57–cysteine 81, and cysteine 75–cysteine 86. 3 residues coordinate Ca(2+): tyrosine 27, glycine 29, and glycine 31. Residue histidine 47 is part of the active site. Ca(2+) is bound at residue aspartate 48. The active site involves aspartate 89.

It belongs to the phospholipase A2 family. Group II subfamily. D49 sub-subfamily. Ca(2+) is required as a cofactor. Expressed by the venom gland.

The protein localises to the secreted. It carries out the reaction a 1,2-diacyl-sn-glycero-3-phosphocholine + H2O = a 1-acyl-sn-glycero-3-phosphocholine + a fatty acid + H(+). PLA2 catalyzes the calcium-dependent hydrolysis of the 2-acyl groups in 3-sn-phosphoglycerides. This is Acidic phospholipase A2 A from Gloydius halys (Chinese water mocassin).